A 427-amino-acid chain; its full sequence is MTRTNSDFLSSTDPAIAELINDELQRQRDHLELIASENFTSAAVLAAQGSVLTNKYAEGLPGKRYYGGCEYIDKIEQLAINRAKQIFGAAHANVQPHSGAQANFAVFLSLLQPGDKIMGMDLSHGGHLTHGSPVNVSGKWFQVSHYGVSQQTEQLDYDQIRELALRERPKLLICGYSAYPRIIDFEKFRSIADEVGAYLLADIAHIAGLVASGLHPDPIPHCHVVTTTTHKTLRGPRGGLILTSDAELGKKLDKSVFPGTQGGPLEHVIAGKAVAFGEALKPEFKTYSAQVIENARALAEQLQNRGLKLVSNGTDNHLLLVDLRSVNLTGKQADQLVSTVNITANKNTIPFDPQSPFVTSGLRLGSPAMTTRGLGVAEFTEIANIISDRLLSPDSDVVTQDCRQRVAALCDRFPLYPHLEIPVPALA.

Residues Leu122 and 126-128 (GHL) each bind (6S)-5,6,7,8-tetrahydrofolate. Lys231 carries the N6-(pyridoxal phosphate)lysine modification. 355 to 357 (SPF) provides a ligand contact to (6S)-5,6,7,8-tetrahydrofolate.

This sequence belongs to the SHMT family. As to quaternary structure, homodimer. Requires pyridoxal 5'-phosphate as cofactor.

It localises to the cytoplasm. The enzyme catalyses (6R)-5,10-methylene-5,6,7,8-tetrahydrofolate + glycine + H2O = (6S)-5,6,7,8-tetrahydrofolate + L-serine. The protein operates within one-carbon metabolism; tetrahydrofolate interconversion. Its pathway is amino-acid biosynthesis; glycine biosynthesis; glycine from L-serine: step 1/1. Its function is as follows. Catalyzes the reversible interconversion of serine and glycine with tetrahydrofolate (THF) serving as the one-carbon carrier. This reaction serves as the major source of one-carbon groups required for the biosynthesis of purines, thymidylate, methionine, and other important biomolecules. Also exhibits THF-independent aldolase activity toward beta-hydroxyamino acids, producing glycine and aldehydes, via a retro-aldol mechanism. The sequence is that of Serine hydroxymethyltransferase from Nostoc punctiforme (strain ATCC 29133 / PCC 73102).